The sequence spans 620 residues: Guanylate cyclase soluble subunit beta-1 (620 aa).

Histidine 105 provides a ligand contact to heme. The Guanylate cyclase domain occupies 421–554 (TILFSGIVGF…NTVNLTSRTE (134 aa)).

The protein belongs to the adenylyl cyclase class-4/guanylyl cyclase family. As to quaternary structure, the active enzyme is formed by a heterodimer of an alpha and a beta subunit. Heterodimer with GUCY1A1. Can also form inactive homodimers in vitro. Heme serves as cofactor.

The protein resides in the cytoplasm. The catalysed reaction is GTP = 3',5'-cyclic GMP + diphosphate. Its activity is regulated as follows. Activated by nitric oxide in the presence of magnesium or manganese ions. In terms of biological role, mediates responses to nitric oxide (NO) by catalyzing the biosynthesis of the signaling molecule cGMP. The chain is Guanylate cyclase soluble subunit beta-1 (Gucy1b1) from Mus musculus (Mouse).